The sequence spans 513 residues: Histone acetyltransferase KAT5 (513 aa).

Residues 8–65 enclose the Tudor-knot domain; it reads IEGCRLPVLRRNQDNEDEWPLAEILSVKDISGRKLFYVHYIDFNKRLDEWVTHERLDL. N6-acetyllysine is present on K52. The tract at residues 69–106 is disordered; sequence QFPKKEAKTPTKNGLPGSRPGSPEREVPASAQASGKTL. Phosphoserine is present on S86. At S90 the chain carries Phosphoserine; by CDK1 and CDK9. N6-acetyllysine; by autocatalysis is present on residues K104 and K120. The segment at 122–217 is disordered; it reads REAIPGGEPD…SAPRMTGSLV (96 aa). Residues 133–144 are compositionally biased toward polar residues; it reads PLSSSSCLQPNH. Residues K148, K150, K187, and K189 each carry the N6-acetyllysine; by autocatalysis modification. Position 199 is a phosphoserine (S199). Residues 227-504 enclose the MYST-type HAT domain; that stretch reads TRMKNIECIE…IDSKCLHFTP (278 aa). A C2HC MYST-type zinc finger spans residues 260 to 285; that stretch reads LYLCEFCLKYGRSLKCLQRHLTKCDL. An N6-acetyllysine; by autocatalysis modification is found at K327. The segment at 368-513 is interaction with ATF2; that stretch reads ACILTLPPYQ…PKDWSKRGKW (146 aa). Residues 370-372 and 377-383 each bind acetyl-CoA; these read ILT and QRRGYGK. Residue E403 is the Proton donor/acceptor of the active site. The acetyl-CoA site is built by S407 and S416. Residue K430 forms a Glycyl lysine isopeptide (Lys-Gly) (interchain with G-Cter in SUMO1); alternate linkage. K430 participates in a covalent cross-link: Glycyl lysine isopeptide (Lys-Gly) (interchain with G-Cter in SUMO2); alternate. A Glycyl lysine isopeptide (Lys-Gly) (interchain with G-Cter in SUMO1) cross-link involves residue K451.

It belongs to the MYST (SAS/MOZ) family. In terms of assembly, component of the NuA4 histone acetyltransferase complex which contains the catalytic subunit KAT5/TIP60 and the subunits EP400, TRRAP/PAF400, BRD8/SMAP, EPC1, DMAP1/DNMAP1, RUVBL1/TIP49, RUVBL2, ING3, actin, ACTL6A/BAF53A, MORF4L1/MRG15, MORF4L2/MRGX, MRGBP, YEATS4/GAS41, VPS72/YL1 and MEAF6. KAT5/TIP60, EPC1, and ING3 together constitute a minimal HAT complex termed Piccolo NuA4. The NuA4 complex interacts with MYC. Interacts with ATM. Interacts with JADE1. Interacts with PLA2G4A/CPLA2, EDNRA and HDAC7. Interacts with the cytoplasmic tail of APP and APBB1/FE65. Interacts with TRIM24 and TRIM68. Forms a complex with SENP6 and UBE2I in response to UV irradiation. Identified in a complex with HINT1. Interacts with ATF2 and CUL3. Interacts with NR1D2 (via N-terminus). Component of a SWR1-like complex. Interacts with FOXP3. Interacts with ZBTB49. Interacts with SRF. Interacts with ATF3; promoting autoacetylation and deubiquitination by USP7. Interacts with EP300/p300; interaction promotes KAT5 autoacetylation. Interacts with PRKDC; interaction is impaired following KAT5 sumoylation. Interacts with GPR50. Interacts with NME3; this interaction enables recruitment of NME3 at DNA damage sites where it plays a role in the repair of DNA. In terms of processing, phosphorylated on Ser-86 and Ser-90; enhanced during G2/M phase. The phosphorylated form has a higher activity. Phosphorylation at Ser-90 by CDK1 or CDK9 is a prerequisite for phosphorylation at Ser-86 by GSK3. Phosphorylation at Ser-86 by GSK3 (GSK3A or GSK3B) activates acetyltransferase and acyltransferase activity. Phosphorylation at Ser-90 by CDK9 promotes KAT5 recruitment to chromatin. Phosphorylation by VRK1 following DNA damage promotes KAT5 association with chromatin and histone acetyltransferase activity. Post-translationally, autoacetylated. Autoacetylation is required for histone acetyltransferase activity. Autoacetylation at Lys-327 is facilitated by interaction with EP300/p300: it prevents ubiquitination and subsequent degradation by the proteasome and promotes acetylation of target proteins. Deacetylated by HDAC3 and SIRT1. Deacetylation by HDAC3 promotes its ubiquitination and cytoplasmic localization. Sumoylated by UBE2I at Lys-430 and Lys-451, leading to increase of its histone acetyltransferase activity in UV-induced DNA damage response, as well as its translocation to nuclear bodies. Sumoylation with SUMO2 by PIAS4 at Lys-430 promotes repair of DNA double-strand breaks (DSBs) via homologous recombination (HR). Sumoylation by PIAS4 impairs interaction with PRKDC, inhibiting non-homologous end joining (NHEJ)-mediated repair of DSBs, thereby facilitating HR. Desumoylated by SENP3. In terms of processing, ubiquitinated by MDM2, leading to its proteasome-dependent degradation. Ubiquitination is prevented by autoacetylation at Lys-327. Ubiquitinated following deacetylation by HDAC3, leading to cytoplasmic localization. Deubiquitinated by USP7 following interaction with ATF3, promoting its stabilization. As to expression, expressed in testis, heart, brain, kidney and liver. Weakly expressed in lung.

The protein localises to the nucleus. It is found in the chromosome. The protein resides in the cytoplasm. It localises to the centromere. Its subcellular location is the kinetochore. The protein localises to the cytoskeleton. It is found in the spindle pole. The protein resides in the nucleolus. It localises to the perinuclear region. It catalyses the reaction L-lysyl-[histone] + acetyl-CoA = N(6)-acetyl-L-lysyl-[histone] + CoA + H(+). The enzyme catalyses L-lysyl-[protein] + acetyl-CoA = N(6)-acetyl-L-lysyl-[protein] + CoA + H(+). It carries out the reaction (2E)-butenoyl-CoA + L-lysyl-[protein] = N(6)-(2E)-butenoyl-L-lysyl-[protein] + CoA + H(+). The catalysed reaction is 2-hydroxyisobutanoyl-CoA + L-lysyl-[protein] = N(6)-(2-hydroxyisobutanoyl)-L-lysyl-[protein] + CoA + H(+). It catalyses the reaction (S)-lactoyl-CoA + L-lysyl-[protein] = N(6)-[(S)-lactoyl]-L-lysyl-[protein] + CoA + H(+). Its activity is regulated as follows. Acyltransferase and acetyltransferase activities are activated by phosphorylation and autoacetylation. Autoacetylation activates the histone acetyltransferase activity. Functionally, catalytic subunit of the NuA4 histone acetyltransferase complex, a multiprotein complex involved in transcriptional activation of select genes principally by acetylation of nucleosomal histones H2A and H4. Histone acetylation alters nucleosome-DNA interactions and promotes interaction of the modified histones with other proteins which positively regulate transcription. The NuA4 histone acetyltransferase complex is required for the activation of transcriptional programs associated with proto-oncogene mediated growth induction, tumor suppressor mediated growth arrest and replicative senescence, apoptosis, and DNA repair. The NuA4 complex plays a direct role in repair of DNA double-strand breaks (DSBs) by promoting homologous recombination (HR): the complex inhibits TP53BP1 binding to chromatin via MBTD1, which recognizes and binds histone H4 trimethylated at 'Lys-20' (H4K20me), and KAT5 that catalyzes acetylation of 'Lys-15' of histone H2A (H2AK15ac), thereby blocking the ubiquitination mark required for TP53BP1 localization at DNA breaks. Also involved in DSB repair by mediating acetylation of 'Lys-5' of histone H2AX (H2AXK5ac), promoting NBN/NBS1 assembly at the sites of DNA damage. The NuA4 complex plays a key role in hematopoietic stem cell maintenance and is required to maintain acetylated H2A.Z/H2AZ1 at MYC target genes. The NuA4 complex is also required for spermatid development by promoting acetylation of histones: histone hyperacetylation is required for histone replacement during the transition from round to elongating spermatids. Component of a SWR1-like complex that specifically mediates the removal of histone H2A.Z/H2AZ1 from the nucleosome. Also acetylates non-histone proteins, such as BMAL1, ATM, AURKB, CHKA, CGAS, ERCC4/XPF, LPIN1, TP53/p53, NDC80/HEC1, NR1D2, RAN, SOX4, FOXP3, SQSTM1, ULK1 and RUBCNL/Pacer. Directly acetylates and activates ATM. Promotes nucleotide excision repair (NER) by mediating acetylation of ERCC4/XPF, thereby promoting formation of the ERCC4-ERCC1 complex. Relieves NR1D2-mediated inhibition of APOC3 expression by acetylating NR1D2. Acts as a regulator of regulatory T-cells (Treg) by catalyzing FOXP3 acetylation, thereby promoting FOXP3 transcriptional repressor activity. Involved in skeletal myoblast differentiation by mediating acetylation of SOX4. Catalyzes acetylation of APBB1/FE65, increasing its transcription activator activity. Promotes transcription elongation during the activation phase of the circadian cycle by catalyzing acetylation of BMAL1, promoting elongation of circadian transcripts. Together with GSK3 (GSK3A or GSK3B), acts as a regulator of autophagy: phosphorylated at Ser-86 by GSK3 under starvation conditions, leading to activate acetyltransferase activity and promote acetylation of key autophagy regulators, such as ULK1 and RUBCNL/Pacer. Acts as a regulator of the cGAS-STING innate antiviral response by catalyzing acetylation the N-terminus of CGAS, thereby promoting CGAS DNA-binding and activation. Also regulates lipid metabolism by mediating acetylation of CHKA or LPIN1. Promotes lipolysis of lipid droplets following glucose deprivation by mediating acetylation of isoform 1 of CHKA, thereby promoting monomerization of CHKA and its conversion into a tyrosine-protein kinase. Acts as a regulator of fatty-acid-induced triacylglycerol synthesis by catalyzing acetylation of LPIN1, thereby promoting the synthesis of diacylglycerol. In addition to protein acetyltransferase, can use different acyl-CoA substrates, such as (2E)-butenoyl-CoA (crotonyl-CoA), S-lactoyl-CoA (lactyl-CoA) and 2-hydroxyisobutanoyl-CoA (2-hydroxyisobutyryl-CoA), and is able to mediate protein crotonylation, lactylation and 2-hydroxyisobutyrylation, respectively. Acts as a key regulator of chromosome segregation and kinetochore-microtubule attachment during mitosis by mediating acetylation or crotonylation of target proteins. Catalyzes acetylation of AURKB at kinetochores, increasing AURKB activity and promoting accurate chromosome segregation in mitosis. Acetylates RAN during mitosis, promoting microtubule assembly at mitotic chromosomes. Acetylates NDC80/HEC1 during mitosis, promoting robust kinetochore-microtubule attachment. Catalyzes crotonylation of MAPRE1/EB1, thereby ensuring accurate spindle positioning in mitosis. Catalyzes lactylation of NBN/NBS1 in response to DNA damage, thereby promoting DNA double-strand breaks (DSBs) via homologous recombination (HR). In Mus musculus (Mouse), this protein is Histone acetyltransferase KAT5.